Consider the following 503-residue polypeptide: MKAKVRILDIETGRFLAFISEEDAKNAKLHPGDLVKIETAKRTIYGDVVISKTINPGEIGVTKDILRSYTFSEGEVVNLVPSETPESVRYIRRKMNGQKLKKVEIEAIVKDIVNRKLRDIEISSFVTSLEINGLDMDEIAWLTTAMAETGDMLDIDRKPIMDVHSIGGVPGNKTNILVVPIVAAAGLTIPKTSSRAITSAAGTADVVEVLAPVTHSLDEIKRIVEKIGACLVWGGALNLAPADDLTIKAERALSIDPRGLMLASIMSKKYAMGSQYVLIDIPTGEGVKVEKVEDARSLAKDFIELGKRLGQYVETAITYGGQPIGHTVGPALEAKEALETIIEGKGPGSLVEKATGLAGILLEMGGVAPAGMGKKMAKEILESGKAYEKLKEIIEEQGGDPNIKPEDIPIGDKTYTFVAQTSGYITRIDNKAITAIARAAGAPEDKGAGIMLHVKVGEKVKERDPLFTVHAESGTRLDQAIIQARRMEPIRIEGMVLQRIGNI.

Residues Gly-168, 194 to 199, and Thr-203 each bind AMP; that span reads SRAITS. Asp-256 acts as the Proton donor in catalysis. AMP is bound by residues Ser-264 and Lys-288.

It belongs to the thymidine/pyrimidine-nucleoside phosphorylase family. Type 2 subfamily.

The enzyme catalyses AMP + phosphate = alpha-D-ribose 1,5-bisphosphate + adenine. It catalyses the reaction CMP + phosphate = cytosine + alpha-D-ribose 1,5-bisphosphate. The catalysed reaction is UMP + phosphate = alpha-D-ribose 1,5-bisphosphate + uracil. In terms of biological role, catalyzes the conversion of AMP and phosphate to adenine and ribose 1,5-bisphosphate (R15P). Exhibits phosphorylase activity toward CMP and UMP in addition to AMP. Functions in an archaeal AMP degradation pathway, together with R15P isomerase and RubisCO. The polypeptide is AMP phosphorylase (Thermococcus sibiricus (strain DSM 12597 / MM 739)).